The following is a 92-amino-acid chain: Small ribosomal subunit protein uS19c (92 aa).

The protein belongs to the universal ribosomal protein uS19 family.

It localises to the plastid. Its subcellular location is the chloroplast. Functionally, protein S19 forms a complex with S13 that binds strongly to the 16S ribosomal RNA. The sequence is that of Small ribosomal subunit protein uS19c from Chlorokybus atmophyticus (Soil alga).